We begin with the raw amino-acid sequence, 267 residues long: 4-hydroxy-tetrahydrodipicolinate reductase (267 aa).

Residues Gly8–Met13, Glu34, Gly98–Thr100, and Ser122–Met125 contribute to the NAD(+) site. His155 functions as the Proton donor/acceptor in the catalytic mechanism. His156 is a (S)-2,3,4,5-tetrahydrodipicolinate binding site. Lys159 functions as the Proton donor in the catalytic mechanism. Gly165–Thr166 is a binding site for (S)-2,3,4,5-tetrahydrodipicolinate.

It belongs to the DapB family.

The protein localises to the cytoplasm. It carries out the reaction (S)-2,3,4,5-tetrahydrodipicolinate + NAD(+) + H2O = (2S,4S)-4-hydroxy-2,3,4,5-tetrahydrodipicolinate + NADH + H(+). It catalyses the reaction (S)-2,3,4,5-tetrahydrodipicolinate + NADP(+) + H2O = (2S,4S)-4-hydroxy-2,3,4,5-tetrahydrodipicolinate + NADPH + H(+). It participates in amino-acid biosynthesis; L-lysine biosynthesis via DAP pathway; (S)-tetrahydrodipicolinate from L-aspartate: step 4/4. In terms of biological role, catalyzes the conversion of 4-hydroxy-tetrahydrodipicolinate (HTPA) to tetrahydrodipicolinate. The chain is 4-hydroxy-tetrahydrodipicolinate reductase from Syntrophobacter fumaroxidans (strain DSM 10017 / MPOB).